We begin with the raw amino-acid sequence, 285 residues long: Nucleotide-binding protein Psyr_4150 (285 aa).

Residue 8–15 (GRSGSGKS) coordinates ATP. 60–63 (DARN) contributes to the GTP binding site.

It belongs to the RapZ-like family.

Its function is as follows. Displays ATPase and GTPase activities. This Pseudomonas syringae pv. syringae (strain B728a) protein is Nucleotide-binding protein Psyr_4150.